Reading from the N-terminus, the 363-residue chain is Ribosomal RNA large subunit methyltransferase M (363 aa).

Residues Ser190, 223–226 (CPGG), Asp242, Asp262, and Asp279 each bind S-adenosyl-L-methionine. Lys308 serves as the catalytic Proton acceptor.

This sequence belongs to the class I-like SAM-binding methyltransferase superfamily. RNA methyltransferase RlmE family. RlmM subfamily. In terms of assembly, monomer.

It localises to the cytoplasm. The catalysed reaction is cytidine(2498) in 23S rRNA + S-adenosyl-L-methionine = 2'-O-methylcytidine(2498) in 23S rRNA + S-adenosyl-L-homocysteine + H(+). Catalyzes the 2'-O-methylation at nucleotide C2498 in 23S rRNA. The protein is Ribosomal RNA large subunit methyltransferase M of Vibrio vulnificus (strain CMCP6).